A 369-amino-acid chain; its full sequence is MKIVAEASVPYLRGIVDPVADITYLHSDCFSPDTIRHARVLIVRSITKCTPALLQGTDVRLITTATAGFDHIDREYCESHGILWRNSPGCNATAVAQYVMCCLCRLALREGFSLKEKVMGIVGVGHVGGELKRLASAYGMEFLLCDPPRSEAEQDNSFLPLSRLVEQCDIISFHVPLTHEDPHATYHLIGEAFLRSCADKRPILINACRGAVADTQALIRAVKSGWLQALVIDCWEGEPDIDLSLLDLADIATPHIAGFSADGKANGARMCLEAITEVFGLEFPLLHTLAPPPPTHPIIDLSLFPDHRIERALLHTFDPLVPDRSLRASPKTFEEQRKAYPHPREMKAFTVVGATTEEAKILRGMDFIS.

Substrate contacts are provided by Ser45 and Thr66. Asp146 provides a ligand contact to NAD(+). Arg209 is an active-site residue. Asp233 is an NAD(+) binding site. Glu238 is an active-site residue. The active-site Proton donor is the His255. Gly258 provides a ligand contact to NAD(+).

This sequence belongs to the D-isomer specific 2-hydroxyacid dehydrogenase family. PdxB subfamily. As to quaternary structure, homodimer.

It is found in the cytoplasm. It carries out the reaction 4-phospho-D-erythronate + NAD(+) = (R)-3-hydroxy-2-oxo-4-phosphooxybutanoate + NADH + H(+). It participates in cofactor biosynthesis; pyridoxine 5'-phosphate biosynthesis; pyridoxine 5'-phosphate from D-erythrose 4-phosphate: step 2/5. Functionally, catalyzes the oxidation of erythronate-4-phosphate to 3-hydroxy-2-oxo-4-phosphonooxybutanoate. This is Erythronate-4-phosphate dehydrogenase from Porphyromonas gingivalis (strain ATCC BAA-308 / W83).